The sequence spans 394 residues: Phosphoglycerate kinase (394 aa).

Substrate is bound by residues 21-23, Arg37, 60-63, Arg119, and Arg152; these read DFN and HLGR. ATP contacts are provided by residues Lys202, Glu324, and 350–353; that span reads GGDS.

It belongs to the phosphoglycerate kinase family. In terms of assembly, monomer.

Its subcellular location is the cytoplasm. It carries out the reaction (2R)-3-phosphoglycerate + ATP = (2R)-3-phospho-glyceroyl phosphate + ADP. The protein operates within carbohydrate degradation; glycolysis; pyruvate from D-glyceraldehyde 3-phosphate: step 2/5. This Carboxydothermus hydrogenoformans (strain ATCC BAA-161 / DSM 6008 / Z-2901) protein is Phosphoglycerate kinase.